Reading from the N-terminus, the 32-residue chain is Kappa-theraphotoxin-Gr2b (32 aa).

3 cysteine pairs are disulfide-bonded: C2-C16, C9-C21, and C15-C25.

It belongs to the neurotoxin 30 (phrixotoxin) family. As to expression, expressed by the venom gland.

The protein resides in the secreted. Its function is as follows. Binds the voltage-sensor domain of the potassium channel KvAP (from the archaeon Aeropyrum pernix) and affects channel gating. The protein is Kappa-theraphotoxin-Gr2b of Grammostola rosea (Chilean rose tarantula).